The sequence spans 665 residues: DNA ligase (665 aa).

NAD(+)-binding positions include 35 to 39, 88 to 89, and Glu-117; these read DAIYD and SL. The N6-AMP-lysine intermediate role is filled by Lys-119. NAD(+) is bound by residues Arg-140, Glu-174, Lys-290, and Lys-314. Cys-406, Cys-409, Cys-424, and Cys-429 together coordinate Zn(2+). A BRCT domain is found at 588–665; that stretch reads KKTERFAQLS…EEAFNELLVS (78 aa).

This sequence belongs to the NAD-dependent DNA ligase family. LigA subfamily. Mg(2+) serves as cofactor. Mn(2+) is required as a cofactor.

It carries out the reaction NAD(+) + (deoxyribonucleotide)n-3'-hydroxyl + 5'-phospho-(deoxyribonucleotide)m = (deoxyribonucleotide)n+m + AMP + beta-nicotinamide D-nucleotide.. In terms of biological role, DNA ligase that catalyzes the formation of phosphodiester linkages between 5'-phosphoryl and 3'-hydroxyl groups in double-stranded DNA using NAD as a coenzyme and as the energy source for the reaction. It is essential for DNA replication and repair of damaged DNA. The sequence is that of DNA ligase from Metamycoplasma arthritidis (strain 158L3-1) (Mycoplasma arthritidis).